Reading from the N-terminus, the 72-residue chain is Large ribosomal subunit protein bL31 (72 aa).

It belongs to the bacterial ribosomal protein bL31 family. Type A subfamily. In terms of assembly, part of the 50S ribosomal subunit.

Functionally, binds the 23S rRNA. The sequence is that of Large ribosomal subunit protein bL31 from Deinococcus deserti (strain DSM 17065 / CIP 109153 / LMG 22923 / VCD115).